The primary structure comprises 605 residues: F-box/WD repeat-containing protein 1A (605 aa).

Residues 128–177 (ASYEKEKELCVKYFEQWSESDQVEFVEHLISQMCHYQHGHINSYLKPMLQ) are homodimerization domain D. Residues 182-228 (TALPARGLDHIAENILSYLDAKSLCAAELVCKEWYRVTSDGMLWKKL) form the F-box domain. The interval 190–228 (DHIAENILSYLDAKSLCAAELVCKEWYRVTSDGMLWKKL) is required for down-regulation of SNAI1. WD repeat units follow at residues 301–338 (ETSKGVYCLQYDDQKIVSGLRDNTIKIWDKSTLECKRI), 341–378 (GHTGSVLCLQYDERVIITGSSDSTVRVWDVNAGEMLNT), 381–418 (HHCEAVLHLRFNNGMMVTCSKDRSIAVWDMASPTDITL), 424–461 (GHRAAVNVVDFDDKYIVSASGDRTIKVWNTSTCEFVRT), 464–503 (GHKRGIACLQYRDRLVVSGSSDNTIRLWDIECGACLRVLE), 505–541 (HEELVRCIRFDNKRIVSGAYDGKIKVWDLMAALDPRA), and 553–590 (EHSGRVFRLQFDEFQIVSSSHDDTILIWDFLNDPAAHA).

As to quaternary structure, homodimer. Self-associates. Component of the SCF(BTRC) complex, composed of SKP1, CUL1 and BTRC. Direct interaction with SKP1 with SKP1 occurs via the F-box domain. Interacts with phosphorylated ubiquitination substrates SMAD3 and SMAD4. Interacts with phosphorylated ubiquitination substrates CTNNB1, NFKBIA, NFKBIB, NFKBIE, NFKB1/nuclear factor NF-kappa-B p105 subunit, ATF4, CDC25A, DLG1, FBXO5 and SNAI1; the interaction requires the phosphorylation of the 2 serine residues in the substrate destruction motif D-S-G-X(2,3,4)-S. Binds UBQLN1. Interacts with CDC34 and UBE2R2. Interacts with FBXW11. Interacts with CUL4A and DDB1. Part of a SCF(BTRC)-like complex lacking CUL1, which is associated with phosphorylated NKBIA and RELA; RELA interacts directly with NFKBIA. Interacts with the phosphorylated form of GLI3. Interacts with CLU. Interacts with PER1 (phosphorylated), PER2 (phosphorylated) and PER3. Interacts with phosphorylated ubiquitination substrate CEP68. Interacts with ZC3H12A; this interaction occurs when ZC3H12A is phosphorylated in a IKBKB/IKKB-dependent manner. Interacts with HSF1; this interaction occurs during mitosis and induces HSF1 ubiquitin-dependent degradation, a process inhibited by CDC20. Interacts with NFE2L1. Interacts with INAVA. Interacts with IL10RA; this interaction leads to IL10RA ubiquitination and subsequent degradation. Interacts with REST. Interacts with KLF4; this interaction leads to KLF4 ubiquitination and subsequent degradation. Interacts with UBR2, as part of a SCF(BTRC) complex; the interaction mediates 'Lys-48'-linked ubiquitination of UBR2 and is regulated by DUSP22 in the T-cell receptor signaling pathway. In terms of processing, ubiquitinated via 'Lys-11'-linked polyubiquitin by some cullin-5-RING E3 ubiquitin-protein ligase complex (ECS complex), leading to its degradation. Deubiquitinated by OTUD5, promoting its stability. In terms of tissue distribution, expressed in heart, brain, liver, skeletal muscle and, most strongly, in testis.

The protein localises to the cytoplasm. The protein resides in the nucleus. The protein operates within protein modification; protein ubiquitination. In terms of biological role, substrate recognition component of a SCF (SKP1-CUL1-F-box protein) E3 ubiquitin-protein ligase complex which mediates the ubiquitination and subsequent proteasomal degradation of target proteins. Recognizes and binds to phosphorylated target proteins. SCF(BTRC) mediates the ubiquitination of phosphorylated NFKB, ATF4, CDC25A, DLG1, FBXO5, PER1, SMAD3, SMAD4, SNAI1 and probably NFKB2. SCF(BTRC) mediates the ubiquitination of CTNNB1 and participates in Wnt signaling. SCF(BTRC) mediates the ubiquitination of NFKBIA, NFKBIB and NFKBIE; the degradation frees the associated NFKB1 to translocate into the nucleus and to activate transcription. Ubiquitination of NFKBIA occurs at 'Lys-21' and 'Lys-22'. The SCF(FBXW11) complex also regulates NF-kappa-B by mediating ubiquitination of phosphorylated NFKB1: specifically ubiquitinates the p105 form of NFKB1, leading to its degradation. SCF(BTRC) mediates the ubiquitination of CEP68; this is required for centriole separation during mitosis. SCF(BTRC) mediates the ubiquitination and subsequent degradation of nuclear NFE2L1. Has an essential role in the control of the clock-dependent transcription via degradation of phosphorylated PER1 and PER2. May be involved in ubiquitination and subsequent proteasomal degradation through a DBB1-CUL4 E3 ubiquitin-protein ligase. Required for activation of NFKB-mediated transcription by IL1B, MAP3K14, MAP3K1, IKBKB and TNF. Required for proteolytic processing of GLI3. Mediates ubiquitination of REST, thereby leading to its proteasomal degradation. SCF(BTRC) mediates the ubiquitination and subsequent proteasomal degradation of KLF4; thereby negatively regulating cell pluripotency maintenance and embryogenesis. SCF(BTRC) acts as a regulator of mTORC1 signaling pathway by catalyzing ubiquitination and subsequent proteasomal degradation of phosphorylated DEPTOR, TFE3 and MITF. SCF(BTRC) directs 'Lys-48'-linked ubiquitination of UBR2 in the T-cell receptor signaling pathway. The sequence is that of F-box/WD repeat-containing protein 1A from Mus musculus (Mouse).